A 316-amino-acid polypeptide reads, in one-letter code: Acetyl-coenzyme A carboxylase carboxyl transferase subunit alpha (316 aa).

Residues 39–293 (RLQDKSKALT…RGELLAQLKM (255 aa)) form the CoA carboxyltransferase C-terminal domain.

This sequence belongs to the AccA family. In terms of assembly, acetyl-CoA carboxylase is a heterohexamer composed of biotin carboxyl carrier protein (AccB), biotin carboxylase (AccC) and two subunits each of ACCase subunit alpha (AccA) and ACCase subunit beta (AccD).

The protein localises to the cytoplasm. It catalyses the reaction N(6)-carboxybiotinyl-L-lysyl-[protein] + acetyl-CoA = N(6)-biotinyl-L-lysyl-[protein] + malonyl-CoA. The protein operates within lipid metabolism; malonyl-CoA biosynthesis; malonyl-CoA from acetyl-CoA: step 1/1. Component of the acetyl coenzyme A carboxylase (ACC) complex. First, biotin carboxylase catalyzes the carboxylation of biotin on its carrier protein (BCCP) and then the CO(2) group is transferred by the carboxyltransferase to acetyl-CoA to form malonyl-CoA. This is Acetyl-coenzyme A carboxylase carboxyl transferase subunit alpha from Pseudomonas aeruginosa (strain UCBPP-PA14).